A 362-amino-acid chain; its full sequence is Formate dehydrogenase (362 aa).

Valine 93 and asparagine 119 together coordinate substrate. Residues 174–175, aspartate 195, 230–234, threonine 256, aspartate 282, 311–314, and serine 357 contribute to the NAD(+) site; these read RI, PLHAG, and HYSG.

This sequence belongs to the D-isomer specific 2-hydroxyacid dehydrogenase family. FDH subfamily. In terms of assembly, homodimer.

Its subcellular location is the cytoplasm. The enzyme catalyses formate + NAD(+) = CO2 + NADH. In terms of biological role, catalyzes the NAD(+)-dependent oxidation of formate to carbon dioxide. Formate oxidation is the final step in the methanol oxidation pathway in methylotrophic microorganisms. Has a role in the detoxification of exogenous formate in non-methylotrophic organisms. This chain is Formate dehydrogenase, found in Pichia angusta (Yeast).